We begin with the raw amino-acid sequence, 213 residues long: Uridine kinase (213 aa).

Gly15–Ser22 contacts ATP.

It belongs to the uridine kinase family.

It is found in the cytoplasm. The catalysed reaction is uridine + ATP = UMP + ADP + H(+). The enzyme catalyses cytidine + ATP = CMP + ADP + H(+). Its pathway is pyrimidine metabolism; CTP biosynthesis via salvage pathway; CTP from cytidine: step 1/3. The protein operates within pyrimidine metabolism; UMP biosynthesis via salvage pathway; UMP from uridine: step 1/1. This is Uridine kinase from Escherichia fergusonii (strain ATCC 35469 / DSM 13698 / CCUG 18766 / IAM 14443 / JCM 21226 / LMG 7866 / NBRC 102419 / NCTC 12128 / CDC 0568-73).